Reading from the N-terminus, the 162-residue chain is SsrA-binding protein (162 aa).

The protein belongs to the SmpB family.

It is found in the cytoplasm. Its function is as follows. Required for rescue of stalled ribosomes mediated by trans-translation. Binds to transfer-messenger RNA (tmRNA), required for stable association of tmRNA with ribosomes. tmRNA and SmpB together mimic tRNA shape, replacing the anticodon stem-loop with SmpB. tmRNA is encoded by the ssrA gene; the 2 termini fold to resemble tRNA(Ala) and it encodes a 'tag peptide', a short internal open reading frame. During trans-translation Ala-aminoacylated tmRNA acts like a tRNA, entering the A-site of stalled ribosomes, displacing the stalled mRNA. The ribosome then switches to translate the ORF on the tmRNA; the nascent peptide is terminated with the 'tag peptide' encoded by the tmRNA and targeted for degradation. The ribosome is freed to recommence translation, which seems to be the essential function of trans-translation. This is SsrA-binding protein from Sorangium cellulosum (strain So ce56) (Polyangium cellulosum (strain So ce56)).